The primary structure comprises 355 residues: Phosphate acyltransferase (355 aa).

Belongs to the PlsX family. In terms of assembly, homodimer. Probably interacts with PlsY.

The protein localises to the cytoplasm. It carries out the reaction a fatty acyl-[ACP] + phosphate = an acyl phosphate + holo-[ACP]. Its pathway is lipid metabolism; phospholipid metabolism. In terms of biological role, catalyzes the reversible formation of acyl-phosphate (acyl-PO(4)) from acyl-[acyl-carrier-protein] (acyl-ACP). This enzyme utilizes acyl-ACP as fatty acyl donor, but not acyl-CoA. This Azorhizobium caulinodans (strain ATCC 43989 / DSM 5975 / JCM 20966 / LMG 6465 / NBRC 14845 / NCIMB 13405 / ORS 571) protein is Phosphate acyltransferase.